Here is a 310-residue protein sequence, read N- to C-terminus: MKITTKVLIIGSGPAGLSAAIYTARAALKPILINGMQPGGQLTITTDVENYPGFAETVQGPWLMEQMYMQAKNVGTEIVSDYVEKVDLSKRPFKVFTGAGNEYDAESIIICTGAEAKWLGIASEQKFRGFGVSACATCDGFFFKNQEIVVVGGGNSAVEEALYLTNHANKVTIVHRRDSFRAEKILQDRLFKNSKISVIWDHVVDEIVGSNKPKSVTGVKIQNVHTKEISLLNCSGVFIAIGHAPNTGLFTGQIVMDDDNYIITKSGTTRTSVEGVFAAGDVQDKIYRQAVTAAGTGCMAALEAEKFLNK.

Residue 34 to 41 coordinates FAD; sequence NGMQPGGQ. The cysteines at positions 135 and 138 are disulfide-linked. 281 to 290 is an FAD binding site; it reads DVQDKIYRQA.

The protein belongs to the class-II pyridine nucleotide-disulfide oxidoreductase family. As to quaternary structure, homodimer. FAD is required as a cofactor.

The protein localises to the cytoplasm. It catalyses the reaction [thioredoxin]-dithiol + NADP(+) = [thioredoxin]-disulfide + NADPH + H(+). The sequence is that of Thioredoxin reductase (trxB) from Rickettsia conorii (strain ATCC VR-613 / Malish 7).